The sequence spans 556 residues: Arginine--tRNA ligase (556 aa).

A 'HIGH' region motif is present at residues 132–142; sequence ANPTGDLHLGH.

This sequence belongs to the class-I aminoacyl-tRNA synthetase family. As to quaternary structure, monomer.

It is found in the cytoplasm. It catalyses the reaction tRNA(Arg) + L-arginine + ATP = L-arginyl-tRNA(Arg) + AMP + diphosphate. This is Arginine--tRNA ligase from Shouchella clausii (strain KSM-K16) (Alkalihalobacillus clausii).